The primary structure comprises 410 residues: Peptidase T (410 aa).

A disordered region spans residues 11–30 (RYAEIDTQSDPDSESTPSTE). His-78 provides a ligand contact to Zn(2+). The active site involves Asp-80. Position 140 (Asp-140) interacts with Zn(2+). Glu-174 acts as the Proton acceptor in catalysis. Zn(2+) is bound by residues Glu-175, Asp-197, and His-379.

Belongs to the peptidase M20B family. Zn(2+) is required as a cofactor.

Its subcellular location is the cytoplasm. It carries out the reaction Release of the N-terminal residue from a tripeptide.. Functionally, cleaves the N-terminal amino acid of tripeptides. The polypeptide is Peptidase T (Staphylococcus carnosus (strain TM300)).